The sequence spans 206 residues: Superoxide dismutase [Mn] (206 aa).

The Mn(2+) site is built by His-30, His-78, Asp-166, and His-170.

Belongs to the iron/manganese superoxide dismutase family. Homodimer. It depends on Mn(2+) as a cofactor.

It carries out the reaction 2 superoxide + 2 H(+) = H2O2 + O2. Its function is as follows. Destroys superoxide anion radicals which are normally produced within the cells and which are toxic to biological systems. In Chlamydia trachomatis serovar D (strain ATCC VR-885 / DSM 19411 / UW-3/Cx), this protein is Superoxide dismutase [Mn] (sodA).